Consider the following 238-residue polypeptide: 1-(5-phosphoribosyl)-5-[(5-phosphoribosylamino)methylideneamino] imidazole-4-carboxamide isomerase (238 aa).

Residue Asp-8 is the Proton acceptor of the active site. Asp-129 functions as the Proton donor in the catalytic mechanism.

The protein belongs to the HisA/HisF family.

Its subcellular location is the cytoplasm. The enzyme catalyses 1-(5-phospho-beta-D-ribosyl)-5-[(5-phospho-beta-D-ribosylamino)methylideneamino]imidazole-4-carboxamide = 5-[(5-phospho-1-deoxy-D-ribulos-1-ylimino)methylamino]-1-(5-phospho-beta-D-ribosyl)imidazole-4-carboxamide. It participates in amino-acid biosynthesis; L-histidine biosynthesis; L-histidine from 5-phospho-alpha-D-ribose 1-diphosphate: step 4/9. The sequence is that of 1-(5-phosphoribosyl)-5-[(5-phosphoribosylamino)methylideneamino] imidazole-4-carboxamide isomerase from Anaeromyxobacter dehalogenans (strain 2CP-1 / ATCC BAA-258).